Reading from the N-terminus, the 195-residue chain is Dehydrin DHN1 (195 aa).

Residues 1–195 (MAEYGDQYGR…IKEKLPGGHH (195 aa)) are disordered. Low complexity predominate over residues 37–48 (YGTTGTTVGYGT). Over residues 50–64 (QCVTTVTTGAQKTDQ) the composition is skewed to polar residues. A compositionally biased stretch (low complexity) spans 65-88 (YGTPGTTGAYGTDQYGTTGTTGEY). Composition is skewed to basic and acidic residues over residues 136-153 (KEKI…DDQT) and 173-195 (SPEH…GGHH).

This sequence belongs to the plant dehydrin family. Post-translationally, phosphorylated in vitro by CK2. In terms of tissue distribution, expressed in roots and leaves.

The protein localises to the cytoplasm. It is found in the nucleus. The sequence is that of Dehydrin DHN1 from Avicennia marina (Grey mangrove).